The sequence spans 205 residues: High frequency lysogenization protein HflD homolog (205 aa).

Belongs to the HflD family.

The protein resides in the cytoplasm. Its subcellular location is the cell inner membrane. This Shewanella piezotolerans (strain WP3 / JCM 13877) protein is High frequency lysogenization protein HflD homolog.